The sequence spans 760 residues: Xaa-Pro dipeptidyl-peptidase (760 aa).

Residues Ser-349, Asp-469, and His-499 each act as charge relay system in the active site.

The protein belongs to the peptidase S15 family. In terms of assembly, homodimer.

The protein localises to the cytoplasm. It catalyses the reaction Hydrolyzes Xaa-Pro-|- bonds to release unblocked, N-terminal dipeptides from substrates including Ala-Pro-|-p-nitroanilide and (sequentially) Tyr-Pro-|-Phe-Pro-|-Gly-Pro-|-Ile.. Its function is as follows. Removes N-terminal dipeptides sequentially from polypeptides having unsubstituted N-termini provided that the penultimate residue is proline. The chain is Xaa-Pro dipeptidyl-peptidase from Streptococcus pyogenes serotype M12 (strain MGAS9429).